We begin with the raw amino-acid sequence, 475 residues long: Ribulose bisphosphate carboxylase large chain (475 aa).

Residues M1 to S2 constitute a propeptide that is removed on maturation. N-acetylproline is present on P3. K14 carries the post-translational modification N6,N6,N6-trimethyllysine. 2 residues coordinate substrate: N123 and T173. The Proton acceptor role is filled by K175. Residue K177 coordinates substrate. 3 residues coordinate Mg(2+): K201, D203, and E204. K201 is subject to N6-carboxylysine. The Proton acceptor role is filled by H294. R295, H327, and S379 together coordinate substrate.

This sequence belongs to the RuBisCO large chain family. Type I subfamily. As to quaternary structure, heterohexadecamer of 8 large chains and 8 small chains. The cofactor is Mg(2+).

It is found in the plastid. It localises to the chloroplast. It catalyses the reaction 2 (2R)-3-phosphoglycerate + 2 H(+) = D-ribulose 1,5-bisphosphate + CO2 + H2O. It carries out the reaction D-ribulose 1,5-bisphosphate + O2 = 2-phosphoglycolate + (2R)-3-phosphoglycerate + 2 H(+). In terms of biological role, ruBisCO catalyzes two reactions: the carboxylation of D-ribulose 1,5-bisphosphate, the primary event in carbon dioxide fixation, as well as the oxidative fragmentation of the pentose substrate in the photorespiration process. Both reactions occur simultaneously and in competition at the same active site. In Coleochaete orbicularis (Charophycean green alga), this protein is Ribulose bisphosphate carboxylase large chain.